The following is an 805-amino-acid chain: Transcription factor SFL1 (805 aa).

Positions 1–24 (MSHLVSSSLGTTTTATPTSRSPHT) are enriched in low complexity. The segment at 1–110 (MSHLVSSSLG…NNNVSNNNST (110 aa)) is disordered. Residues 25 to 69 (NHSTPYNQNSITSNRSSPVPKNSVNSRIIPQTMNPPIDMKSNNIL) show a composition bias toward polar residues. The span at 71 to 85 (PEKDTDTSRGDHSES) shows a compositional bias: basic and acidic residues. A compositionally biased stretch (low complexity) spans 86-110 (KASSISSASGTTTTNNNNVSNNNST). Residues 117–226 (FIHKLYDMLH…LKNIKRRSSK (110 aa)) mediate DNA binding. 5 disordered regions span residues 273 to 336 (MQSP…NQSP), 438 to 483 (QSNF…VAPQ), 513 to 675 (REDS…PAPQ), 691 to 746 (HQKS…SENH), and 759 to 805 (VSEL…RKLE). Residues 295-310 (QQQQQQQQQQQQQQQQ) are compositionally biased toward low complexity. 2 stretches are compositionally biased toward polar residues: residues 454–480 (HGNS…NLNV) and 533–556 (PSRN…NFNP). Over residues 557–566 (QQSQSQSQVQ) the composition is skewed to low complexity. Polar residues-rich tracts occupy residues 581 to 597 (ESTY…SQIL), 604 to 614 (VNHSPLVQQQQ), and 622 to 635 (NDSS…SSLP). Residues 637-659 (TRPLSRQQQQQQQTLHHPSTTSS) are compositionally biased toward low complexity. The segment covering 716–738 (PISSTAPTTMITSTSKPTSTSGA) has biased composition (polar residues).

The protein belongs to the HSF family.

Its subcellular location is the nucleus. Functionally, transcription factor that plays a role of repressor of filamentous growth and flocculation. Antagonizes functions of SFL2 and FLO8. Plays a role in the hyphal repression induced by secreted factors like dodecanol by competitors such as Pseudomonas aeruginosa and Burkholderia cenocepacia. The protein is Transcription factor SFL1 (SFL1) of Candida albicans (strain SC5314 / ATCC MYA-2876) (Yeast).